A 77-amino-acid chain; its full sequence is Large ribosomal subunit protein uL24 (77 aa).

The disordered stretch occupies residues 42–61 (KKHQKPSQTNANGGVVESEG).

This sequence belongs to the universal ribosomal protein uL24 family. Part of the 50S ribosomal subunit.

In terms of biological role, one of two assembly initiator proteins, it binds directly to the 5'-end of the 23S rRNA, where it nucleates assembly of the 50S subunit. Its function is as follows. One of the proteins that surrounds the polypeptide exit tunnel on the outside of the subunit. The sequence is that of Large ribosomal subunit protein uL24 from Lactobacillus helveticus (strain DPC 4571).